The following is a 108-amino-acid chain: Large ribosomal subunit protein uL24 (108 aa).

A disordered region spans residues 46 to 65; the sequence is RHTRVQQSSRGSQSGGIVTQ. A compositionally biased stretch (low complexity) spans 51-61; the sequence is QQSSRGSQSGG.

This sequence belongs to the universal ribosomal protein uL24 family. Part of the 50S ribosomal subunit.

Its function is as follows. One of two assembly initiator proteins, it binds directly to the 5'-end of the 23S rRNA, where it nucleates assembly of the 50S subunit. Functionally, one of the proteins that surrounds the polypeptide exit tunnel on the outside of the subunit. This chain is Large ribosomal subunit protein uL24, found in Parafrankia sp. (strain EAN1pec).